A 61-amino-acid polypeptide reads, in one-letter code: Protein translocase subunit SecE (61 aa).

A helical transmembrane segment spans residues 38 to 58; that stretch reads GIGMILIGTIGMIIRIIGYLV.

This sequence belongs to the SecE/SEC61-gamma family. Component of the Sec protein translocase complex. Heterotrimer consisting of SecY (alpha), SecG (beta) and SecE (gamma) subunits. The heterotrimers can form oligomers, although 1 heterotrimer is thought to be able to translocate proteins. Interacts with the ribosome. May interact with SecDF, and other proteins may be involved.

It is found in the cell membrane. Essential subunit of the Sec protein translocation channel SecYEG. Clamps together the 2 halves of SecY. May contact the channel plug during translocation. The sequence is that of Protein translocase subunit SecE from Thermococcus kodakarensis (strain ATCC BAA-918 / JCM 12380 / KOD1) (Pyrococcus kodakaraensis (strain KOD1)).